The sequence spans 381 residues: Phthiodiolone/phenolphthiodiolone dimycocerosates ketoreductase (381 aa).

The protein belongs to the mer family. Phthiodiolone/phenolphthiodiolone dimycocerosates ketoreductase subfamily.

Catalyzes the reduction of the keto moiety of phthiodiolone dimycocerosates (DIM B) and glycosylated phenolphthiodiolone dimycocerosates to form the intermediate compounds phthiotriol and glycosylated phenolphthiotriol dimycocerosates during phthiocerol dimycocerosates (DIM A) and glycosylated phenolphthiocerol dimycocerosates (PGL) biosynthesis. This is Phthiodiolone/phenolphthiodiolone dimycocerosates ketoreductase from Mycobacterium bovis (strain ATCC BAA-935 / AF2122/97).